The following is a 141-amino-acid chain: Early nodulin-like protein 19 (141 aa).

A signal peptide spans 1–26; it reads MGRSMVLISAVVLAFLVAAPIPEVTA. The Phytocyanin domain occupies 27-127; that stretch reads KKYLVGDKKF…GMKLDVLVET (101 aa). Asn42 and Asn88 each carry an N-linked (GlcNAc...) asparagine glycan. Cys80 and Cys115 are disulfide-bonded.

Belongs to the early nodulin-like (ENODL) family.

Functionally, may act as a carbohydrate transporter. The sequence is that of Early nodulin-like protein 19 from Arabidopsis thaliana (Mouse-ear cress).